We begin with the raw amino-acid sequence, 177 residues long: Peptide methionine sulfoxide reductase MsrA (177 aa).

Residue C15 is part of the active site.

Belongs to the MsrA Met sulfoxide reductase family.

It catalyses the reaction L-methionyl-[protein] + [thioredoxin]-disulfide + H2O = L-methionyl-(S)-S-oxide-[protein] + [thioredoxin]-dithiol. It carries out the reaction [thioredoxin]-disulfide + L-methionine + H2O = L-methionine (S)-S-oxide + [thioredoxin]-dithiol. Functionally, has an important function as a repair enzyme for proteins that have been inactivated by oxidation. Catalyzes the reversible oxidation-reduction of methionine sulfoxide in proteins to methionine. This Listeria monocytogenes serotype 4b (strain CLIP80459) protein is Peptide methionine sulfoxide reductase MsrA.